Here is a 968-residue protein sequence, read N- to C-terminus: Glycine dehydrogenase (decarboxylating) (968 aa).

An N6-(pyridoxal phosphate)lysine modification is found at Lys712.

It belongs to the GcvP family. As to quaternary structure, the glycine cleavage system is composed of four proteins: P, T, L and H. Requires pyridoxal 5'-phosphate as cofactor.

The enzyme catalyses N(6)-[(R)-lipoyl]-L-lysyl-[glycine-cleavage complex H protein] + glycine + H(+) = N(6)-[(R)-S(8)-aminomethyldihydrolipoyl]-L-lysyl-[glycine-cleavage complex H protein] + CO2. Its function is as follows. The glycine cleavage system catalyzes the degradation of glycine. The P protein binds the alpha-amino group of glycine through its pyridoxal phosphate cofactor; CO(2) is released and the remaining methylamine moiety is then transferred to the lipoamide cofactor of the H protein. This chain is Glycine dehydrogenase (decarboxylating), found in Prochlorococcus marinus (strain NATL1A).